The primary structure comprises 166 residues: Small ribosomal subunit protein uS5 (166 aa).

In terms of domain architecture, S5 DRBM spans 11-74; it reads LQEKLIAVNR…EKARRNMITV (64 aa).

The protein belongs to the universal ribosomal protein uS5 family. In terms of assembly, part of the 30S ribosomal subunit. Contacts proteins S4 and S8.

Functionally, with S4 and S12 plays an important role in translational accuracy. Its function is as follows. Located at the back of the 30S subunit body where it stabilizes the conformation of the head with respect to the body. The protein is Small ribosomal subunit protein uS5 of Histophilus somni (strain 2336) (Haemophilus somnus).